The primary structure comprises 253 residues: Glucosamine-6-phosphate deaminase (253 aa).

Catalysis depends on Asp-65, which acts as the Proton acceptor; for enolization step. The active-site For ring-opening step is the Asn-133. His-135 serves as the catalytic Proton acceptor; for ring-opening step. Glu-140 acts as the For ring-opening step in catalysis.

The protein belongs to the glucosamine/galactosamine-6-phosphate isomerase family. NagB subfamily.

The catalysed reaction is alpha-D-glucosamine 6-phosphate + H2O = beta-D-fructose 6-phosphate + NH4(+). It participates in amino-sugar metabolism; N-acetylneuraminate degradation; D-fructose 6-phosphate from N-acetylneuraminate: step 5/5. Catalyzes the reversible isomerization-deamination of glucosamine 6-phosphate (GlcN6P) to form fructose 6-phosphate (Fru6P) and ammonium ion. The polypeptide is Glucosamine-6-phosphate deaminase (Corynebacterium glutamicum (strain ATCC 13032 / DSM 20300 / JCM 1318 / BCRC 11384 / CCUG 27702 / LMG 3730 / NBRC 12168 / NCIMB 10025 / NRRL B-2784 / 534)).